The chain runs to 107 residues: UPF0473 protein llmg_0152 (107 aa).

It belongs to the UPF0473 family.

The chain is UPF0473 protein llmg_0152 from Lactococcus lactis subsp. cremoris (strain MG1363).